A 481-amino-acid polypeptide reads, in one-letter code: NADH-quinone oxidoreductase subunit N (481 aa).

The next 13 helical transmembrane spans lie at 9 to 29, 39 to 59, 76 to 96, 104 to 124, 158 to 178, 205 to 225, 232 to 252, 265 to 285, 293 to 313, 318 to 338, 359 to 379, 399 to 419, and 443 to 463; these read MLPE…GIVV, AVSM…DHVA, CISR…FLCA, FSVV…AGHF, FFIL…LVYG, AFVL…MWAV, PMAA…LLLA, ILYG…LGAL, LLAY…VLHG, AIFH…SVLL, FVAF…PFLG, VAFP…FYCF, and LGLT…LFLA.

The protein belongs to the complex I subunit 2 family. In terms of assembly, NDH-1 is composed of 14 different subunits. Subunits NuoA, H, J, K, L, M, N constitute the membrane sector of the complex.

Its subcellular location is the cell inner membrane. It catalyses the reaction a quinone + NADH + 5 H(+)(in) = a quinol + NAD(+) + 4 H(+)(out). Functionally, NDH-1 shuttles electrons from NADH, via FMN and iron-sulfur (Fe-S) centers, to quinones in the respiratory chain. The immediate electron acceptor for the enzyme in this species is believed to be ubiquinone. Couples the redox reaction to proton translocation (for every two electrons transferred, four hydrogen ions are translocated across the cytoplasmic membrane), and thus conserves the redox energy in a proton gradient. This is NADH-quinone oxidoreductase subunit N from Anaplasma marginale (strain Florida).